The primary structure comprises 473 residues: Glutamine synthetase (473 aa).

Residues 15–100 enclose the GS beta-grasp domain; it reads ENIKIIDLKF…ICSIKEPRTG (86 aa). Positions 107–473 constitute a GS catalytic domain; it reads PRTIAAKAVE…PYEFSLYYDC (367 aa). Glu-132 provides a ligand contact to Mn(2+). Glu-134 is a binding site for Mg(2+). Glu-210 is an ATP binding site. 2 residues coordinate Mg(2+): Glu-215 and Glu-223. Residues 267–268 and Gly-268 each bind L-glutamate; that span reads NG. His-272 provides a ligand contact to Mg(2+). Residues 274 to 276 and Ser-276 each bind ATP; that span reads HQS. Arg-324, Glu-330, and Arg-342 together coordinate L-glutamate. ATP contacts are provided by Arg-342, Arg-347, and Lys-356. Glu-361 contributes to the Mn(2+) binding site. Arg-363 contributes to the L-glutamate binding site. Tyr-401 carries the O-AMP-tyrosine modification.

This sequence belongs to the glutamine synthetase family. As to quaternary structure, oligomer of 12 subunits arranged in the form of two hexagons. It depends on Mg(2+) as a cofactor.

It localises to the cytoplasm. The catalysed reaction is L-glutamate + NH4(+) + ATP = L-glutamine + ADP + phosphate + H(+). Its activity is regulated as follows. Inhibited by ADP (90%), AMP (80%), alanine (52%) and aspartate (41%). The activity of this enzyme could be controlled by adenylation under conditions of abundant glutamine. Its function is as follows. Involved in nitrogen metabolism via ammonium assimilation. Catalyzes the ATP-dependent biosynthesis of glutamine from glutamate and ammonia. This is Glutamine synthetase from Synechocystis sp. (strain ATCC 27184 / PCC 6803 / Kazusa).